The primary structure comprises 368 residues: Glutamate 5-kinase (368 aa).

Lys-9 serves as a coordination point for ATP. Positions 49, 136, and 148 each coordinate substrate. Residues 168 to 169 (TD) and 210 to 216 (TGGMMTK) contribute to the ATP site. The PUA domain maps to 275–353 (AGIITIDNGA…ADIENVLGYE (79 aa)).

The protein belongs to the glutamate 5-kinase family.

It localises to the cytoplasm. The catalysed reaction is L-glutamate + ATP = L-glutamyl 5-phosphate + ADP. It functions in the pathway amino-acid biosynthesis; L-proline biosynthesis; L-glutamate 5-semialdehyde from L-glutamate: step 1/2. Catalyzes the transfer of a phosphate group to glutamate to form L-glutamate 5-phosphate. The chain is Glutamate 5-kinase from Haemophilus influenzae (strain PittGG).